A 219-amino-acid chain; its full sequence is MMNRLFGKPKQEANALQTLDKLNETLEMLEKKEKVLLKKAGAEVEKAKEYSRAKNKRAAIQCLKRKRLYEGQVEQLGNFQLRIHDQMIMLEGAKATTETVDALRSGASAMKAMQKATNIDDVDKTMDEINEQTENMKQIQEALATPMGAAADFDEDELAAELDELESEELESQLLQPATTAPPLPSVPVPAGRQPARPVPQKRTAEEEELAALQAEMAL.

Coiled coils occupy residues 10–41 and 117–176; these read KQEA…KKAG and TNID…QLLQ. The tract at residues 168–219 is disordered; it reads EELESQLLQPATTAPPLPSVPVPAGRQPARPVPQKRTAEEEELAALQAEMAL.

Belongs to the SNF7 family. In terms of assembly, component of the endosomal sorting required for transport complex III (ESCRT-III), composed at least of VPS2, VPS20, VPS24 and VPS32. Interacts with SKD1. Interacts with BRO1/ALIX.

The protein localises to the endosome. Its function is as follows. Component of the ESCRT-III complex, which is required for multivesicular bodies (MVBs) formation and sorting of endosomal cargo proteins into MVBs. The ESCRT-III complex is probably involved in the concentration of MVB cargo. This chain is Vacuolar protein sorting-associated protein 32 homolog 2 (VPS32.2), found in Arabidopsis thaliana (Mouse-ear cress).